Reading from the N-terminus, the 255-residue chain is Serine/threonine-protein phosphatase PP1 (255 aa).

Residues Asp2, His4, Asp30, and Asn62 each coordinate Mn(2+). Residue His63 is the Proton donor of the active site. Residues His111 and His186 each coordinate Mn(2+).

It belongs to the PPP phosphatase family. PP-1 subfamily. Mn(2+) is required as a cofactor.

The enzyme catalyses O-phospho-L-seryl-[protein] + H2O = L-seryl-[protein] + phosphate. It catalyses the reaction O-phospho-L-threonyl-[protein] + H2O = L-threonyl-[protein] + phosphate. The chain is Serine/threonine-protein phosphatase PP1 from Brassica napus (Rape).